The sequence spans 147 residues: 3-dehydroquinate dehydratase (147 aa).

The Proton acceptor role is filled by Tyr-22. 3 residues coordinate substrate: Asn-73, His-79, and Asp-86. Catalysis depends on His-99, which acts as the Proton donor. Residues 100 to 101 (LS) and Arg-110 each bind substrate.

This sequence belongs to the type-II 3-dehydroquinase family. Homododecamer.

The enzyme catalyses 3-dehydroquinate = 3-dehydroshikimate + H2O. Its pathway is metabolic intermediate biosynthesis; chorismate biosynthesis; chorismate from D-erythrose 4-phosphate and phosphoenolpyruvate: step 3/7. In terms of biological role, catalyzes a trans-dehydration via an enolate intermediate. This Synechococcus sp. (strain WH7803) protein is 3-dehydroquinate dehydratase.